The following is a 147-amino-acid chain: UPF0216 protein MK1676 (147 aa).

This sequence belongs to the UPF0216 family.

This Methanopyrus kandleri (strain AV19 / DSM 6324 / JCM 9639 / NBRC 100938) protein is UPF0216 protein MK1676.